The following is a 909-amino-acid chain: Valine--tRNA ligase (909 aa).

The 'HIGH' region motif lies at 52 to 62 (PNVTGVLHVGH). Residues 542–546 (KMSKS) carry the 'KMSKS' region motif. K545 serves as a coordination point for ATP. The stretch at 843–902 (IDIDQLKKRFEKELEKNEQNASKIDSKLKNENFVKNAPPEVIEGEKEKHAEFLRRIEKLK) forms a coiled coil.

Belongs to the class-I aminoacyl-tRNA synthetase family. ValS type 1 subfamily. Monomer.

Its subcellular location is the cytoplasm. The enzyme catalyses tRNA(Val) + L-valine + ATP = L-valyl-tRNA(Val) + AMP + diphosphate. Its function is as follows. Catalyzes the attachment of valine to tRNA(Val). As ValRS can inadvertently accommodate and process structurally similar amino acids such as threonine, to avoid such errors, it has a 'posttransfer' editing activity that hydrolyzes mischarged Thr-tRNA(Val) in a tRNA-dependent manner. The chain is Valine--tRNA ligase from Treponema denticola (strain ATCC 35405 / DSM 14222 / CIP 103919 / JCM 8153 / KCTC 15104).